Consider the following 1465-residue polypeptide: DNA polymerase III PolC-type (1465 aa).

In terms of domain architecture, Exonuclease spans 427 to 583 (YVVFDVETTG…YDAEATGRLL (157 aa)).

It belongs to the DNA polymerase type-C family. PolC subfamily.

Its subcellular location is the cytoplasm. It catalyses the reaction DNA(n) + a 2'-deoxyribonucleoside 5'-triphosphate = DNA(n+1) + diphosphate. Functionally, required for replicative DNA synthesis. This DNA polymerase also exhibits 3' to 5' exonuclease activity. The sequence is that of DNA polymerase III PolC-type from Streptococcus pyogenes serotype M2 (strain MGAS10270).